The sequence spans 335 residues: Adenosine deaminase (335 aa).

Zn(2+) contacts are provided by H12 and H14. Substrate is bound by residues H14 and D16. Zn(2+) is bound at residue H197. E200 (proton donor) is an active-site residue. Position 278 (D278) interacts with Zn(2+).

It belongs to the metallo-dependent hydrolases superfamily. Adenosine and AMP deaminases family. Adenosine deaminase subfamily. The cofactor is Zn(2+).

It carries out the reaction adenosine + H2O + H(+) = inosine + NH4(+). It catalyses the reaction 2'-deoxyadenosine + H2O + H(+) = 2'-deoxyinosine + NH4(+). Catalyzes the hydrolytic deamination of adenosine and 2-deoxyadenosine. The protein is Adenosine deaminase of Clostridium botulinum (strain Loch Maree / Type A3).